The primary structure comprises 121 residues: MKSALHESRADTAEATSSASSAWKSVRALPARTLIFFIELYRTYVSPLRMPTCRFMPTCSEYAVESLRTHGVIKGLFLTVVRLAKCAPWHPGGWDPVPARRDRHAGGRRCCPANVDEQRST.

The disordered stretch occupies residues 97-121; the sequence is VPARRDRHAGGRRCCPANVDEQRST.

This sequence belongs to the UPF0161 family.

It is found in the cell membrane. Functionally, could be involved in insertion of integral membrane proteins into the membrane. In Rhodococcus jostii (strain RHA1), this protein is Putative membrane protein insertion efficiency factor.